Consider the following 87-residue polypeptide: Putative regulatory protein BH2513 (87 aa).

This sequence belongs to the RemA family.

This is Putative regulatory protein BH2513 from Halalkalibacterium halodurans (strain ATCC BAA-125 / DSM 18197 / FERM 7344 / JCM 9153 / C-125) (Bacillus halodurans).